A 277-amino-acid chain; its full sequence is Shikimate dehydrogenase (NADP(+)) (277 aa).

Residues 17 to 19 (SRS) and threonine 64 each bind shikimate. The Proton acceptor role is filled by lysine 68. Shikimate-binding residues include asparagine 88 and aspartate 103. Residues 128 to 132 (GAGGS) and leucine 217 contribute to the NADP(+) site. Tyrosine 219 provides a ligand contact to shikimate. Glycine 240 is an NADP(+) binding site.

This sequence belongs to the shikimate dehydrogenase family. As to quaternary structure, homodimer.

It carries out the reaction shikimate + NADP(+) = 3-dehydroshikimate + NADPH + H(+). It participates in metabolic intermediate biosynthesis; chorismate biosynthesis; chorismate from D-erythrose 4-phosphate and phosphoenolpyruvate: step 4/7. Functionally, involved in the biosynthesis of the chorismate, which leads to the biosynthesis of aromatic amino acids. Catalyzes the reversible NADPH linked reduction of 3-dehydroshikimate (DHSA) to yield shikimate (SA). The chain is Shikimate dehydrogenase (NADP(+)) from Afipia carboxidovorans (strain ATCC 49405 / DSM 1227 / KCTC 32145 / OM5) (Oligotropha carboxidovorans).